A 364-amino-acid chain; its full sequence is MNRATATINVTALKHNLSQIKALAPKSLAWAMIKSNGYGHGLVRVAKALSDANAFGVACIDEALTLREVGIKSPIIVMKGFYNEAELSQFARHRLGAVIHCSDQVSLLEKTNLTSSLSVWLKIDTGMNRLGFSVEQSPAVYNQLKTSSSIQKPIGLMTHLADADNENKTFTELQIKRFFSVTEKMIGPKSIVNSAGFFAYPNALVDWIRPGIILYGISPFGINYNSFKEKIEKKFRPVMTLSAKIIAIKNRRQNDSVGYGCTWSCPEDMPIAIVSIGYGDGYPRHAPSGTPVLLNGKICPLIGRVSMDMIAIDLRSQPNAQVGDDVILWGEGLPVEIIAEKAGTIAYELLCKITQRVQFIEIEK.

Residue Lys34 is the Proton acceptor; specific for D-alanine of the active site. Lys34 carries the N6-(pyridoxal phosphate)lysine modification. Arg129 lines the substrate pocket. Tyr259 serves as the catalytic Proton acceptor; specific for L-alanine. Met307 provides a ligand contact to substrate.

Belongs to the alanine racemase family. Pyridoxal 5'-phosphate is required as a cofactor.

The enzyme catalyses L-alanine = D-alanine. It functions in the pathway amino-acid biosynthesis; D-alanine biosynthesis; D-alanine from L-alanine: step 1/1. Its function is as follows. Catalyzes the interconversion of L-alanine and D-alanine. May also act on other amino acids. The chain is Alanine racemase (alr) from Coxiella burnetii (strain RSA 493 / Nine Mile phase I).